Here is a 230-residue protein sequence, read N- to C-terminus: Sodium channel modifier 1 (230 aa).

Ser-2 is subject to Phosphoserine. The Bipartite nuclear localization signal motif lies at 4-20; the sequence is KREGDDWSQLNVLKKRR. The segment at 42–74 adopts a Matrin-type zinc-finger fold; that stretch reads FACAICPHRPVLDTLAMLTAHRAGKKHLSSLQL. Lys-67 participates in a covalent cross-link: Glycyl lysine isopeptide (Lys-Gly) (interchain with G-Cter in SUMO2). Disordered regions lie at residues 76–106, 129–186, and 200–230; these read YGKKQPGKERKQNPKHQNELRREETKAEAPL, RRKY…SPTR, and GWIPDGRGRWVKDENVEFDSDEEEPPDLPLD. Basic and acidic residues predominate over residues 81 to 102; that stretch reads PGKERKQNPKHQNELRREETKA. Ser-144 bears the Phosphoserine mark. The segment covering 164 to 174 has biased composition (low complexity); sequence PAAGPQAEESA. At Ser-183 the chain carries Phosphoserine. The tract at residues 188–230 is required for interaction with LUC7L2; sequence RALDHYLTLRSSGWIPDGRGRWVKDENVEFDSDEEEPPDLPLD. Residues 205–214 are compositionally biased toward basic and acidic residues; that stretch reads GRGRWVKDEN. Residues 215 to 230 show a composition bias toward acidic residues; the sequence is VEFDSDEEEPPDLPLD. Residue Ser-219 is modified to Phosphoserine.

In terms of assembly, component of the minor spliceosome, which splices U12-type introns. Within this complex, interacts with RNF113A, as well as with SF3B1/SF3b155, SF3B2/SF3b145, SF3B3/SF3b130 and CDC5L. May interact with LUC7L2 and SNRNP70.

It localises to the nucleus. The protein localises to the nucleoplasm. It is found in the nucleus speckle. Its function is as follows. As a component of the minor spliceosome, involved in the splicing of U12-type introns in pre-mRNAs. Plays a role in the regulation of primary cilia length and Hedgehog signaling. The polypeptide is Sodium channel modifier 1 (SCNM1) (Homo sapiens (Human)).